We begin with the raw amino-acid sequence, 130 residues long: Small ribosomal subunit protein uS8 (130 aa).

Belongs to the universal ribosomal protein uS8 family. Part of the 30S ribosomal subunit. Contacts proteins S5 and S12.

Its function is as follows. One of the primary rRNA binding proteins, it binds directly to 16S rRNA central domain where it helps coordinate assembly of the platform of the 30S subunit. In Actinobacillus pleuropneumoniae serotype 5b (strain L20), this protein is Small ribosomal subunit protein uS8.